Here is a 272-residue protein sequence, read N- to C-terminus: MFGFEIQPVRSRNWEIEEEEDQEVVSVEIPKPSISFVNDNYKLEFNNNNDTPFNIIVSTNGSPSIFVKGCFESNQFDEIADISYSDIKPLKTTNTNTVLNNKCTVYRHKIEKSMIFITVQYDLPSERCFGFTELVLNTFKNVSQVLVLDKILNTHYLSQNYTHPIPPFTRAIFNSLFKNDYSLTPLESSNIIENLSASFLTICQVKYIPACSILNLYESHLNIESVQSFTPIVKSIYPQLFNNSSLKQEDITSQFKLMINALNKRNDKGMYM.

It belongs to the PSMG1 family. Forms a heterodimer with psmg2.

Functionally, chaperone protein which promotes assembly of the 20S proteasome as part of a heterodimer with psmg2. In Dictyostelium discoideum (Social amoeba), this protein is Proteasome assembly chaperone 1 (psmG1).